The chain runs to 98 residues: Acylphosphatase (98 aa).

Residues 12 to 98 (TYYVRVRGVV…ERRFDRFQQQ (87 aa)) enclose the Acylphosphatase-like domain. Residues R27 and N45 contribute to the active site.

The protein belongs to the acylphosphatase family.

It catalyses the reaction an acyl phosphate + H2O = a carboxylate + phosphate + H(+). In Burkholderia ambifaria (strain ATCC BAA-244 / DSM 16087 / CCUG 44356 / LMG 19182 / AMMD) (Burkholderia cepacia (strain AMMD)), this protein is Acylphosphatase (acyP).